The primary structure comprises 324 residues: Cathepsin L-like proteinase (324 aa).

The N-terminal stretch at 1 to 16 (MKLIIALAALIVVINA) is a signal peptide. 3 cysteine pairs are disulfide-bonded: cysteine 131–cysteine 174, cysteine 165–cysteine 206, and cysteine 263–cysteine 312. Cysteine 134 is an active-site residue. Active-site residues include histidine 270 and asparagine 290.

The protein belongs to the peptidase C1 family. Expressed in larval carcasses and gut, and adult gut.

The polypeptide is Cathepsin L-like proteinase (Phaedon cochleariae (Mustard beetle)).